The primary structure comprises 228 residues: ATP-dependent dethiobiotin synthetase BioD (228 aa).

12-17 contacts ATP; the sequence is EIGKTT. Mg(2+) is bound at residue T16. K37 is a catalytic residue. Residue S41 participates in substrate binding. ATP contacts are provided by residues D54, 116–119, and 205–207; these read EGAG and PRL. 2 residues coordinate Mg(2+): D54 and E116.

It belongs to the dethiobiotin synthetase family. In terms of assembly, homodimer. It depends on Mg(2+) as a cofactor.

The protein localises to the cytoplasm. It catalyses the reaction (7R,8S)-7,8-diammoniononanoate + CO2 + ATP = (4R,5S)-dethiobiotin + ADP + phosphate + 3 H(+). It functions in the pathway cofactor biosynthesis; biotin biosynthesis; biotin from 7,8-diaminononanoate: step 1/2. Functionally, catalyzes a mechanistically unusual reaction, the ATP-dependent insertion of CO2 between the N7 and N8 nitrogen atoms of 7,8-diaminopelargonic acid (DAPA, also called 7,8-diammoniononanoate) to form a ureido ring. The polypeptide is ATP-dependent dethiobiotin synthetase BioD (Pseudomonas paraeruginosa (strain DSM 24068 / PA7) (Pseudomonas aeruginosa (strain PA7))).